The chain runs to 215 residues: Cytochrome b6 (215 aa).

The helical transmembrane segment at isoleucine 32–phenylalanine 52 threads the bilayer. Heme c is bound at residue cysteine 35. Heme b is bound by residues histidine 86 and histidine 100. 3 helical membrane passes run alanine 90–phenylalanine 110, leucine 116–tyrosine 136, and alanine 186–isoleucine 206. The heme b site is built by histidine 187 and histidine 202.

The protein belongs to the cytochrome b family. PetB subfamily. As to quaternary structure, the 4 large subunits of the cytochrome b6-f complex are cytochrome b6, subunit IV (17 kDa polypeptide, PetD), cytochrome f and the Rieske protein, while the 4 small subunits are PetG, PetL, PetM and PetN. The complex functions as a dimer. It depends on heme b as a cofactor. Heme c serves as cofactor.

It is found in the cellular thylakoid membrane. In terms of biological role, component of the cytochrome b6-f complex, which mediates electron transfer between photosystem II (PSII) and photosystem I (PSI), cyclic electron flow around PSI, and state transitions. This is Cytochrome b6 from Nostoc punctiforme (strain ATCC 29133 / PCC 73102).